A 246-amino-acid chain; its full sequence is uncharacterized protein (246 aa).

A run of 4 helical transmembrane segments spans residues 32 to 52 (TLFF…VGFI), 69 to 89 (IIAI…MCPF), 121 to 141 (IYFK…GVKI), and 146 to 166 (LAYL…MFFC). 4Fe-4S ferredoxin-type domains are found at residues 185 to 213 (FKLK…ITEK) and 210 to 239 (ITEK…FSAF). [4Fe-4S] cluster contacts are provided by C194, C197, C200, C204, C219, C222, C225, and C229.

The protein resides in the cell membrane. This is an uncharacterized protein from Methanocaldococcus jannaschii (strain ATCC 43067 / DSM 2661 / JAL-1 / JCM 10045 / NBRC 100440) (Methanococcus jannaschii).